A 232-amino-acid chain; its full sequence is Glycerol-3-phosphate acyltransferase (232 aa).

6 consecutive transmembrane segments (helical) span residues 4 to 24, 56 to 76, 90 to 110, 124 to 144, 152 to 172, and 191 to 211; these read FLAI…IIAG, VVTL…VGFF, IALS…TVFA, MLIG…LLAV, VGSI…KYVF, and SLDY…IYTH.

Belongs to the PlsY family. Probably interacts with PlsX.

It is found in the cell inner membrane. It catalyses the reaction an acyl phosphate + sn-glycerol 3-phosphate = a 1-acyl-sn-glycero-3-phosphate + phosphate. It participates in lipid metabolism; phospholipid metabolism. In terms of biological role, catalyzes the transfer of an acyl group from acyl-phosphate (acyl-PO(4)) to glycerol-3-phosphate (G3P) to form lysophosphatidic acid (LPA). This enzyme utilizes acyl-phosphate as fatty acyl donor, but not acyl-CoA or acyl-ACP. The polypeptide is Glycerol-3-phosphate acyltransferase (Chlorobaculum tepidum (strain ATCC 49652 / DSM 12025 / NBRC 103806 / TLS) (Chlorobium tepidum)).